The primary structure comprises 489 residues: UDP-N-acetylmuramate--L-alanine ligase (489 aa).

128 to 134 is an ATP binding site; the sequence is GTHGKTT.

This sequence belongs to the MurCDEF family.

It is found in the cytoplasm. It carries out the reaction UDP-N-acetyl-alpha-D-muramate + L-alanine + ATP = UDP-N-acetyl-alpha-D-muramoyl-L-alanine + ADP + phosphate + H(+). It functions in the pathway cell wall biogenesis; peptidoglycan biosynthesis. Its function is as follows. Cell wall formation. This chain is UDP-N-acetylmuramate--L-alanine ligase, found in Shewanella sediminis (strain HAW-EB3).